A 357-amino-acid polypeptide reads, in one-letter code: Arginine kinase (357 aa).

Ala-2 carries the N-acetylalanine modification. In terms of domain architecture, Phosphagen kinase N-terminal spans 9 to 91 (KLEEGFKKLQ…FDPIIEDYHK (83 aa)). 64-68 (GVGVY) contacts L-arginine. The region spanning 119–356 (FVISTRVRCG…LELIKIEKEM (238 aa)) is the Phosphagen kinase C-terminal domain. ATP contacts are provided by residues 122-126 (STRVR) and His-185. Glu-225 serves as a coordination point for L-arginine. Arg-229 contributes to the ATP binding site. Cys-271 contributes to the L-arginine binding site. ATP contacts are provided by residues 280 to 284 (RASVH) and 309 to 314 (RGTRGE). Glu-314 serves as a coordination point for L-arginine.

The protein belongs to the ATP:guanido phosphotransferase family.

It catalyses the reaction L-arginine + ATP = N(omega)-phospho-L-arginine + ADP + H(+). The polypeptide is Arginine kinase (Pachygrapsus marmoratus (Marbled rock crab)).